A 678-amino-acid polypeptide reads, in one-letter code: SPS-sensor component PTR3 (678 aa).

Disordered regions lie at residues 111–158 (TGQG…SDPT) and 179–211 (ANTE…SSLL). A compositionally biased stretch (low complexity) spans 127–144 (TSPSSSSLSLTPSRSSST). Positions 149–158 (ADNKTLSDPT) are enriched in basic and acidic residues. The span at 179-194 (ANTEVGSDHPLTTGTT) shows a compositional bias: polar residues.

Homodimer. Component of the plasma membrane SPS (SSY1-PTR3-SSY5) amino acid sensor complex. Interacts directly with SSY1 and SSY5. Post-translationally, hyperphosphorylated in response to extracellular amino acids and dependent on the amino acid sensor component SSY1. Phosphorylation is positively regulated by casein kinases YCK1 and YCK2, and negatively regulated by phosphatase PP2A regulatory subunit RTS1.

The protein localises to the cell membrane. Component of the SPS-sensor system, which regulates the expression of several amino acid-metabolizing enzymes and amino acid- and peptide-permeases in response to extracellular amino acid levels by controlling the activity of two transcription factors, STP1 and STP2. This is SPS-sensor component PTR3 (PTR3) from Saccharomyces cerevisiae (strain ATCC 204508 / S288c) (Baker's yeast).